A 303-amino-acid polypeptide reads, in one-letter code: Probable cell division protein WhiA (303 aa).

A DNA-binding region (H-T-H motif) is located at residues serine 272–leucine 303.

The protein belongs to the WhiA family.

Involved in cell division and chromosome segregation. The polypeptide is Probable cell division protein WhiA (Streptococcus pyogenes serotype M6 (strain ATCC BAA-946 / MGAS10394)).